Consider the following 179-residue polypeptide: ATP synthase subunit delta (179 aa).

The protein belongs to the ATPase delta chain family. As to quaternary structure, F-type ATPases have 2 components, F(1) - the catalytic core - and F(0) - the membrane proton channel. F(1) has five subunits: alpha(3), beta(3), gamma(1), delta(1), epsilon(1). F(0) has three main subunits: a(1), b(2) and c(10-14). The alpha and beta chains form an alternating ring which encloses part of the gamma chain. F(1) is attached to F(0) by a central stalk formed by the gamma and epsilon chains, while a peripheral stalk is formed by the delta and b chains.

Its subcellular location is the cell inner membrane. Functionally, f(1)F(0) ATP synthase produces ATP from ADP in the presence of a proton or sodium gradient. F-type ATPases consist of two structural domains, F(1) containing the extramembraneous catalytic core and F(0) containing the membrane proton channel, linked together by a central stalk and a peripheral stalk. During catalysis, ATP synthesis in the catalytic domain of F(1) is coupled via a rotary mechanism of the central stalk subunits to proton translocation. In terms of biological role, this protein is part of the stalk that links CF(0) to CF(1). It either transmits conformational changes from CF(0) to CF(1) or is implicated in proton conduction. In Cupriavidus pinatubonensis (strain JMP 134 / LMG 1197) (Cupriavidus necator (strain JMP 134)), this protein is ATP synthase subunit delta.